We begin with the raw amino-acid sequence, 177 residues long: Adenine phosphoribosyltransferase (177 aa).

It belongs to the purine/pyrimidine phosphoribosyltransferase family. As to quaternary structure, homodimer.

The protein resides in the cytoplasm. It carries out the reaction AMP + diphosphate = 5-phospho-alpha-D-ribose 1-diphosphate + adenine. It functions in the pathway purine metabolism; AMP biosynthesis via salvage pathway; AMP from adenine: step 1/1. Its function is as follows. Catalyzes a salvage reaction resulting in the formation of AMP, that is energically less costly than de novo synthesis. This is Adenine phosphoribosyltransferase from Mycoplasma pneumoniae (strain ATCC 29342 / M129 / Subtype 1) (Mycoplasmoides pneumoniae).